Consider the following 349-residue polypeptide: Glycerol-3-phosphate dehydrogenase [NAD(P)+] (349 aa).

NADPH-binding residues include Trp16, Arg36, and Lys110. Sn-glycerol 3-phosphate is bound by residues Lys110, Gly138, and Thr140. Ala142 serves as a coordination point for NADPH. Sn-glycerol 3-phosphate-binding residues include Lys193, Asp246, Ser256, Arg257, and Asn258. Lys193 serves as the catalytic Proton acceptor. Position 257 (Arg257) interacts with NADPH. Val281 and Glu283 together coordinate NADPH.

The protein belongs to the NAD-dependent glycerol-3-phosphate dehydrogenase family.

It is found in the cytoplasm. The enzyme catalyses sn-glycerol 3-phosphate + NAD(+) = dihydroxyacetone phosphate + NADH + H(+). It carries out the reaction sn-glycerol 3-phosphate + NADP(+) = dihydroxyacetone phosphate + NADPH + H(+). It participates in membrane lipid metabolism; glycerophospholipid metabolism. In terms of biological role, catalyzes the reduction of the glycolytic intermediate dihydroxyacetone phosphate (DHAP) to sn-glycerol 3-phosphate (G3P), the key precursor for phospholipid synthesis. In Rhodospirillum rubrum (strain ATCC 11170 / ATH 1.1.1 / DSM 467 / LMG 4362 / NCIMB 8255 / S1), this protein is Glycerol-3-phosphate dehydrogenase [NAD(P)+].